The following is a 468-amino-acid chain: Secretogranin-3 (468 aa).

A signal peptide spans 1-19; that stretch reads MGFLGTGTWILVLVLPIQA. The interval 23 to 69 is disordered; it reads PGGSQDKSLHNRELSAERPLNEQIAEAEEDKIKKTYPPENKPGQSNY. Residues 29-42 are compositionally biased toward basic and acidic residues; the sequence is KSLHNRELSAERPL. Serine 37 bears the Phosphoserine mark. Serine 37 is a glycosylation site (O-linked (Xyl...) (chondroitin sulfate) serine). Threonine 216 and threonine 231 each carry an O-linked (GalNAc...) threonine glycan. Residues 353-406 are disordered; that stretch reads KLFPAPSEKSHEETDSTKEEAAKMEKEYGSLKDSTKDDNSNPGGKTDEPKGKTE. Serine 359 carries O-linked (GalNAc...) serine glycosylation. Over residues 360–406 the composition is skewed to basic and acidic residues; it reads EKSHEETDSTKEEAAKMEKEYGSLKDSTKDDNSNPGGKTDEPKGKTE. A Phosphoserine modification is found at serine 362.

As to quaternary structure, interacts with CHGA. Interacts with secretogranin II/SCG2. Interacts (via C-terminus) with CPE. In terms of processing, O-glycosylated. Detected in urine (at protein level). Expressed in brain, heart, kidney, liver and skeletal muscle.

It is found in the cytoplasmic vesicle. The protein localises to the secretory vesicle. It localises to the secretory vesicle membrane. The protein resides in the secreted. Its function is as follows. Member of the granin protein family that regulates the biogenesis of secretory granules. Acts as a sorting receptor for intragranular proteins including chromogranin A/CHGA. May also play a role in angiogenesis. Promotes endothelial proliferation, migration and tube formation through MEK/ERK signaling pathway. This Homo sapiens (Human) protein is Secretogranin-3 (SCG3).